The chain runs to 572 residues: Linalool synthase TPS2, chloroplastic (572 aa).

A chloroplast-targeting transit peptide spans 1–27 (EVEEPKTKISASTAEASSSRISSAKMT). The disordered stretch occupies residues 1–45 (EVEEPKTKISASTAEASSSRISSAKMTADGTIKLGDQSPLKQSEK). The span at 8-28 (KISASTAEASSSRISSAKMTA) shows a compositional bias: low complexity. Residues arginine 284, aspartate 321, aspartate 325, arginine 462, and asparagine 465 each coordinate (2E)-geranyl diphosphate. Mg(2+) contacts are provided by aspartate 321 and aspartate 325. The DDXXD motif signature appears at 321–325 (DDVYD). 3 residues coordinate Mg(2+): asparagine 465, threonine 469, and serine 473.

The protein belongs to the terpene synthase family. Tpsb subfamily. Monomer. It depends on Mg(2+) as a cofactor. The cofactor is Mn(2+). Expressed in flowers and fruits.

Its subcellular location is the plastid. It is found in the chloroplast. It carries out the reaction (2E)-geranyl diphosphate = beta-myrcene + diphosphate. It catalyses the reaction (2E)-geranyl diphosphate + H2O = linalool + diphosphate. The catalysed reaction is (2E)-geranyl diphosphate = (Z)-beta-ocimene + diphosphate. The enzyme catalyses (2E)-geranyl diphosphate = (E)-beta-ocimene + diphosphate. The protein operates within secondary metabolite biosynthesis; terpenoid biosynthesis. Functionally, monoterpene synthase (mono-TPS) involved in the biosynthesis of monoterpenes natural products, constituent of coffee beverage aroma. Catalyzes the conversion of (2E)-geranyl diphosphate (GPP) into linalool and beta-myrcene, and, as minor products, cis-ocimene and trans-ocimene. Not able to use geranylgeranyl pyrophosphate (GGPP) and farnesyl pyrophosphate (FPP) as substrates. In Coffea arabica (Arabian coffee), this protein is Linalool synthase TPS2, chloroplastic.